Reading from the N-terminus, the 277-residue chain is Undecaprenyl-diphosphatase (277 aa).

5 helical membrane passes run 85 to 105, 109 to 129, 188 to 208, 218 to 238, and 256 to 276; these read VNIV…AGAI, LFAP…ILWV, ATEF…VYSV, ADIP…FLCV, and YRIG…VVWA.

Belongs to the UppP family.

It is found in the cell inner membrane. It catalyses the reaction di-trans,octa-cis-undecaprenyl diphosphate + H2O = di-trans,octa-cis-undecaprenyl phosphate + phosphate + H(+). Catalyzes the dephosphorylation of undecaprenyl diphosphate (UPP). Confers resistance to bacitracin. This Herminiimonas arsenicoxydans protein is Undecaprenyl-diphosphatase.